A 488-amino-acid chain; its full sequence is Catalase (488 aa).

The interval 1–26 is disordered; it reads MTDRKNLTTNQGVPVGDNQNSMTAGR. The segment covering 7-23 has biased composition (polar residues); the sequence is LTTNQGVPVGDNQNSMT. Residues His55 and Asn128 contribute to the active site. A heme-binding site is contributed by Tyr338.

Belongs to the catalase family. Heme is required as a cofactor.

It is found in the cytoplasm. The enzyme catalyses 2 H2O2 = O2 + 2 H2O. Decomposes hydrogen peroxide into water and oxygen; serves to protect cells from the toxic effects of hydrogen peroxide. This chain is Catalase (kat), found in Listeria monocytogenes serovar 1/2a (strain ATCC BAA-679 / EGD-e).